The following is a 160-amino-acid chain: Putative UPF0479 protein YIL177W-A (160 aa).

2 helical membrane passes run 39–59 and 136–156; these read IVFC…KVLQ and VPMI…ISQH.

Belongs to the UPF0479 family.

Its subcellular location is the membrane. This is Putative UPF0479 protein YIL177W-A from Saccharomyces cerevisiae (strain ATCC 204508 / S288c) (Baker's yeast).